A 100-amino-acid polypeptide reads, in one-letter code: Double-stranded DNA-binding protein (100 aa).

Residues 1–19 (MRKMMQREVTYTTAQLARM) mediate DNA binding.

As to quaternary structure, homodimer. Homomultimer. Binds to double-stranded DNA giving rise to multimeric nucleoprotein complexes.

In terms of biological role, histone-like nucleoprotein that binds to the viral dsDNA and responsible for wrapping and condensing the viral DNA about 4-fold. Forms a nucleoprotein complex in which the DNA adopts a right-handed toroidal conformation winding around a protein core. Binding specificity for the viral genome is based on supercoiling. The formation of the nucleoprotein complex at the genome ends, for which the binding affinity is highest, activates the initiation of viral DNA replication. The binding of p6 would recruit the complex formed by the TP and the DNA polymerase to the origin. Protein p6 is also involved in the early to late transcription switch. The polypeptide is Double-stranded DNA-binding protein (Bacillus phage Nf (Bacteriophage Nf)).